A 553-amino-acid chain; its full sequence is Salicylyl-CoA synthase / salicylate adenylyltransferase (553 aa).

Residue Gly203 coordinates ATP. 246 to 247 is a substrate binding site; sequence HN. Residues Gly320, Val342, Asp426, Arg441, and Lys533 each contribute to the ATP site. Lys533 is a binding site for substrate.

This sequence belongs to the ATP-dependent AMP-binding enzyme family.

It catalyses the reaction salicylate + ATP + CoA = 2-hydroxybenzoyl-CoA + AMP + diphosphate. Functionally, involved in the degradation of salicylate via a pathway involving coenzyme A derivative. Catalyzes the conversion of salicylate to salicyloyl-CoA via the formation of a salicylate-adenylate intermediate. The substrate specificity is strong, since benzoate, 3-hydroxybenzoate, 4-hydroxybenzoate, gentisate, 2-aminobenzoate, aminobenzoate, salicylamide, salicylaldoxime and 2-hydroxyphenyl acetate cannot substitute for salicylate. In Streptomyces sp, this protein is Salicylyl-CoA synthase / salicylate adenylyltransferase.